Reading from the N-terminus, the 321-residue chain is Phospholipid phosphatase-related protein type 5 (321 aa).

The next 6 helical transmembrane spans lie at 6–26, 62–82, 122–142, 196–213, 225–245, and 252–272; these read VALISSMLYFQMVIMAGTVML, AVPPVLLYSLAAGVPVLVIIV, FLGIYAFGLFATDIFVNAGQV, AALSVYAATYLTMYITST, VLCLGLMCLAFLTGLNRVAEY, and VIAGFLVGISIAVFLVVCVVN.

It belongs to the PA-phosphatase related phosphoesterase family.

The protein resides in the cell membrane. Its function is as follows. Induces filopodia formation and promotes neurite growth in a CDC42-independent manner; impedes neurite growth inhibitory-mediated axonal retraction. This chain is Phospholipid phosphatase-related protein type 5, found in Mus musculus (Mouse).